Reading from the N-terminus, the 165-residue chain is Transcription antitermination protein NusB (165 aa).

The interval 1 to 27 (MISDDTDQFNPRDAKSPEIAKGKSAKR) is disordered. The span at 10–21 (NPRDAKSPEIAK) shows a compositional bias: basic and acidic residues.

This sequence belongs to the NusB family.

Its function is as follows. Involved in transcription antitermination. Required for transcription of ribosomal RNA (rRNA) genes. Binds specifically to the boxA antiterminator sequence of the ribosomal RNA (rrn) operons. In Pseudomonas syringae pv. tomato (strain ATCC BAA-871 / DC3000), this protein is Transcription antitermination protein NusB.